The chain runs to 550 residues: Probable terpene synthase 2 (550 aa).

Mg(2+) is bound by residues Asp-305, Asp-309, and Glu-457. The DDXXD motif motif lies at 305–309 (DDIYD).

This sequence belongs to the terpene synthase family. It depends on Mg(2+) as a cofactor.

In terms of biological role, probable sesquiterpene synthase. In Ricinus communis (Castor bean), this protein is Probable terpene synthase 2 (TPS2).